Consider the following 211-residue polypeptide: Protein-methionine-sulfoxide reductase heme-binding subunit MsrQ (211 aa).

Helical transmembrane passes span 10-30, 54-74, 82-102, 116-136, 153-173, and 178-198; these read WLKV…VWAI, FLLA…PLLI, LWCF…ELGV, PYLT…FTST, FVYL…KIIS, and IYAG…LSLF.

This sequence belongs to the MsrQ family. As to quaternary structure, heterodimer of a catalytic subunit (MsrP) and a heme-binding subunit (MsrQ). FMN serves as cofactor. The cofactor is heme b.

It is found in the cell inner membrane. In terms of biological role, part of the MsrPQ system that repairs oxidized periplasmic proteins containing methionine sulfoxide residues (Met-O), using respiratory chain electrons. Thus protects these proteins from oxidative-stress damage caused by reactive species of oxygen and chlorine generated by the host defense mechanisms. MsrPQ is essential for the maintenance of envelope integrity under bleach stress, rescuing a wide series of structurally unrelated periplasmic proteins from methionine oxidation, including the primary periplasmic chaperone SurA and the lipoprotein Pal. MsrQ provides electrons for reduction to the reductase catalytic subunit MsrP, using the quinone pool of the respiratory chain. The sequence is that of Protein-methionine-sulfoxide reductase heme-binding subunit MsrQ from Escherichia coli O6:H1 (strain CFT073 / ATCC 700928 / UPEC).